The primary structure comprises 448 residues: Histidinol dehydrogenase (448 aa).

The NAD(+) site is built by Tyr136, Gln197, and Asn220. Substrate-binding residues include Ser243, Gln265, and His268. 2 residues coordinate Zn(2+): Gln265 and His268. Residues Glu333 and His334 each act as proton acceptor in the active site. Residues His334, Asp367, Glu421, and His426 each coordinate substrate. Asp367 contributes to the Zn(2+) binding site. His426 contributes to the Zn(2+) binding site.

This sequence belongs to the histidinol dehydrogenase family. Zn(2+) is required as a cofactor.

The catalysed reaction is L-histidinol + 2 NAD(+) + H2O = L-histidine + 2 NADH + 3 H(+). Its pathway is amino-acid biosynthesis; L-histidine biosynthesis; L-histidine from 5-phospho-alpha-D-ribose 1-diphosphate: step 9/9. Its function is as follows. Catalyzes the sequential NAD-dependent oxidations of L-histidinol to L-histidinaldehyde and then to L-histidine. This chain is Histidinol dehydrogenase, found in Pseudomonas syringae pv. tomato (strain ATCC BAA-871 / DC3000).